The following is a 351-amino-acid chain: UDP-3-O-acylglucosamine N-acyltransferase (351 aa).

The active-site Proton acceptor is the H257.

It belongs to the transferase hexapeptide repeat family. LpxD subfamily. As to quaternary structure, homotrimer.

It carries out the reaction a UDP-3-O-[(3R)-3-hydroxyacyl]-alpha-D-glucosamine + a (3R)-hydroxyacyl-[ACP] = a UDP-2-N,3-O-bis[(3R)-3-hydroxyacyl]-alpha-D-glucosamine + holo-[ACP] + H(+). Its pathway is bacterial outer membrane biogenesis; LPS lipid A biosynthesis. In terms of biological role, catalyzes the N-acylation of UDP-3-O-acylglucosamine using 3-hydroxyacyl-ACP as the acyl donor. Is involved in the biosynthesis of lipid A, a phosphorylated glycolipid that anchors the lipopolysaccharide to the outer membrane of the cell. The chain is UDP-3-O-acylglucosamine N-acyltransferase from Methylorubrum extorquens (strain CM4 / NCIMB 13688) (Methylobacterium extorquens).